Reading from the N-terminus, the 1269-residue chain is Furin-like protease 1, isoforms 1/1-X/2 (1269 aa).

Residues 1 to 57 (MKNDVVRWSRQPTSNTTNSSSSSRSDSNSTHKHRSKSNKLNARQLGSNAARSCQQRS) form a disordered region. Over residues 13–28 (TSNTTNSSSSSRSDSN) the composition is skewed to low complexity. 3 N-linked (GlcNAc...) asparagine glycosylation sites follow: Asn-15, Asn-18, and Asn-28. The segment covering 38–57 (NKLNARQLGSNAARSCQQRS) has biased composition (polar residues). A glycan (N-linked (GlcNAc...) asparagine) is linked at Asn-108. A helical membrane pass occupies residues 119-139 (VFLLALQFSAVVFLCNINVGF). A compositionally biased stretch (low complexity) spans 150 to 163 (SAGGSSPAAPSSAP). The interval 150 to 187 (SAGGSSPAAPSSAPSSPPTVAVPPPPPPSSALKVDPNG) is disordered. Positions 164 to 178 (SSPPTVAVPPPPPPS) are enriched in pro residues. N-linked (GlcNAc...) asparagine glycosylation occurs at Asn-333. A Peptidase S8 domain is found at 340 to 654 (MWYLNRGGGL…YGLMDAAEMV (315 aa)). Residues Asp-372 and His-413 each act as charge relay system in the active site. N-linked (GlcNAc...) asparagine glycosylation occurs at Asn-426. 2 disulfide bridges follow: Cys-430-Cys-579 and Cys-522-Cys-552. Ser-587 functions as the Charge relay system in the catalytic mechanism. Residue Asn-606 is glycosylated (N-linked (GlcNAc...) asparagine). Residues 662-793 (AVPEQQRCEI…SLIFYGTTQS (132 aa)) enclose the P/Homo B domain. Cys-669 and Cys-695 are disulfide-bonded. Asn-727 and Asn-814 each carry an N-linked (GlcNAc...) asparagine glycan. 4 disordered regions span residues 796–875 (PNDP…PPKQ), 891–1015 (ANGK…NSRI), 1031–1050 (ELEP…AKQG), and 1057–1083 (LFKP…PSQT). Low complexity-rich tracts occupy residues 811–821 (TTPNSSSTTSN) and 835–851 (PNNF…LPLG). Residue Asn-857 is glycosylated (N-linked (GlcNAc...) asparagine). Residues 858 to 868 (KSSYVTNNPLL) are compositionally biased toward polar residues. N-linked (GlcNAc...) asparagine glycans are attached at residues Asn-897 and Asn-908. Low complexity-rich tracts occupy residues 905–915 (NKGNKSNNGNK) and 929–940 (TTQSTIIQTSTS). The segment covering 975–985 (KSYDEKSRKVV) has biased composition (basic and acidic residues). Asn-994 carries an N-linked (GlcNAc...) asparagine glycan. Residues 1005–1014 (ESTTTSSNSR) are compositionally biased toward polar residues. The segment covering 1062 to 1074 (NGGNSRQGNTKKS) has biased composition (polar residues). A helical membrane pass occupies residues 1233–1253 (LGLSLLFFMIMQVFFLNFKHA).

This sequence belongs to the peptidase S8 family. Furin subfamily. Requires Ca(2+) as cofactor. As to expression, in adults, isoform 1-X is expressed in CNS, fat body and female reproductive tissues, and in embryos, in CNS, tracheal pits, hindgut, posterior spiracles and anal pads.

Its subcellular location is the golgi apparatus membrane. The enzyme catalyses Release of mature proteins from their proproteins by cleavage of -Arg-Xaa-Yaa-Arg-|-Zaa- bonds, where Xaa can be any amino acid and Yaa is Arg or Lys. Releases albumin, complement component C3 and von Willebrand factor from their respective precursors.. Functionally, furin is likely to represent the ubiquitous endoprotease activity within constitutive secretory pathways and capable of cleavage at the RX(K/R)R consensus motif. This Drosophila melanogaster (Fruit fly) protein is Furin-like protease 1, isoforms 1/1-X/2 (Fur1).